The chain runs to 192 residues: Phosphoheptose isomerase (192 aa).

An SIS domain is found at 37-192; that stretch reads LADSFKAGGK…IQLIEKEMVK (156 aa). Residue 52–54 coordinates substrate; the sequence is NGG. Zn(2+) contacts are provided by His61 and Glu65. Residues Glu65, 93–94, 119–121, Ser124, and Gln172 each bind substrate; these read ND and STS. Positions 172 and 180 each coordinate Zn(2+).

It belongs to the SIS family. GmhA subfamily. In terms of assembly, homotetramer. It depends on Zn(2+) as a cofactor.

It localises to the cytoplasm. It carries out the reaction 2 D-sedoheptulose 7-phosphate = D-glycero-alpha-D-manno-heptose 7-phosphate + D-glycero-beta-D-manno-heptose 7-phosphate. The protein operates within carbohydrate biosynthesis; D-glycero-D-manno-heptose 7-phosphate biosynthesis; D-glycero-alpha-D-manno-heptose 7-phosphate and D-glycero-beta-D-manno-heptose 7-phosphate from sedoheptulose 7-phosphate: step 1/1. Functionally, catalyzes the isomerization of sedoheptulose 7-phosphate in D-glycero-D-manno-heptose 7-phosphate. This chain is Phosphoheptose isomerase, found in Salmonella dublin (strain CT_02021853).